The chain runs to 952 residues: Inner tegument protein (952 aa).

The interaction with large tegument protein stretch occupies residues 490-952 (WQLKPHTILQ…PPPTDPALTN (463 aa)).

It belongs to the herpesviridae inner tegument protein family. In terms of assembly, interacts (via C-terminus) with the large tegument protein/LTP (via N-terminus).

It localises to the virion tegument. The protein localises to the host cytoplasm. It is found in the host nucleus. The protein resides in the host Golgi apparatus. Its subcellular location is the host trans-Golgi network. Plays an essential role in cytoplasmic secondary envelopment during viral egress. Interacts with the capsid via the large tegument protein/LTP and participates in its transport to the host trans-Golgi network (TGN) where secondary envelopment occurs. Modulates tegumentation and capsid accumulation at the viral assembly complex. The polypeptide is Inner tegument protein (63) (Connochaetes taurinus (Blue wildebeest)).